A 341-amino-acid chain; its full sequence is Methionine import ATP-binding protein MetN 3 (341 aa).

The ABC transporter domain occupies 2–241 (ILLENVKKIY…PQQDITKRFV (240 aa)). 38 to 45 (GYSGAGKS) provides a ligand contact to ATP.

Belongs to the ABC transporter superfamily. Methionine importer (TC 3.A.1.24) family. In terms of assembly, the complex is composed of two ATP-binding proteins (MetN), two transmembrane proteins (MetI) and a solute-binding protein (MetQ).

It localises to the cell membrane. The catalysed reaction is L-methionine(out) + ATP + H2O = L-methionine(in) + ADP + phosphate + H(+). It catalyses the reaction D-methionine(out) + ATP + H2O = D-methionine(in) + ADP + phosphate + H(+). Part of the ABC transporter complex MetNIQ involved in methionine import. Responsible for energy coupling to the transport system. The protein is Methionine import ATP-binding protein MetN 3 of Bacillus cereus (strain ATCC 10987 / NRS 248).